The chain runs to 744 residues: Probable methylmalonyl-CoA mutase, mitochondrial (744 aa).

The B12-binding domain maps to 605–737 (QPRIMVAKMG…EKLEANLPEA (133 aa)). Residue histidine 618 coordinates adenosylcob(III)alamin.

It belongs to the methylmalonyl-CoA mutase family. As to quaternary structure, homodimer. Adenosylcob(III)alamin serves as cofactor.

Its subcellular location is the mitochondrion matrix. It carries out the reaction (R)-methylmalonyl-CoA = succinyl-CoA. Its function is as follows. Involved, in man, in the degradation of several amino acids, odd-chain fatty acids and cholesterol via propionyl-CoA to the tricarboxylic acid cycle. MCM has different functions in other species. In Caenorhabditis elegans, this protein is Probable methylmalonyl-CoA mutase, mitochondrial (mmcm-1).